The primary structure comprises 385 residues: 4-hydroxy-3-methylbut-2-en-1-yl diphosphate synthase (flavodoxin) (385 aa).

C282, C285, C317, and E324 together coordinate [4Fe-4S] cluster.

Belongs to the IspG family. [4Fe-4S] cluster serves as cofactor.

It carries out the reaction (2E)-4-hydroxy-3-methylbut-2-enyl diphosphate + oxidized [flavodoxin] + H2O + 2 H(+) = 2-C-methyl-D-erythritol 2,4-cyclic diphosphate + reduced [flavodoxin]. The protein operates within isoprenoid biosynthesis; isopentenyl diphosphate biosynthesis via DXP pathway; isopentenyl diphosphate from 1-deoxy-D-xylulose 5-phosphate: step 5/6. In terms of biological role, converts 2C-methyl-D-erythritol 2,4-cyclodiphosphate (ME-2,4cPP) into 1-hydroxy-2-methyl-2-(E)-butenyl 4-diphosphate. The sequence is that of 4-hydroxy-3-methylbut-2-en-1-yl diphosphate synthase (flavodoxin) from Nocardia farcinica (strain IFM 10152).